A 265-amino-acid polypeptide reads, in one-letter code: MKEDSCLQIGGKSFSSRLMVGTGKYTSSEVMLESLANTESEIVTVAVRRIQNNQNGENLLEKIDWKKFWMLPNTAGCTNSDEAIRIAILGRELAKLSGQEENNFVKLEVIPDKKYLLPDPIETLKAAEILINKDFIVLPYINADPILAKKLEEIGCSTVMPLGSPIGSGQGLLNLSNISIIIENSNIPVIIDAGIGVPSEASQAMELGADGVLINSAIALAKNPLKMAKAMNYGVKAGREAFLAGRIEKQKLANASSPEINISIK.

The active-site Schiff-base intermediate with DXP is the K106. Residues G167, 193 to 194 (AG), and 215 to 216 (NS) contribute to the 1-deoxy-D-xylulose 5-phosphate site.

This sequence belongs to the ThiG family. In terms of assembly, homotetramer. Forms heterodimers with either ThiH or ThiS.

It localises to the cytoplasm. The catalysed reaction is [ThiS sulfur-carrier protein]-C-terminal-Gly-aminoethanethioate + 2-iminoacetate + 1-deoxy-D-xylulose 5-phosphate = [ThiS sulfur-carrier protein]-C-terminal Gly-Gly + 2-[(2R,5Z)-2-carboxy-4-methylthiazol-5(2H)-ylidene]ethyl phosphate + 2 H2O + H(+). It functions in the pathway cofactor biosynthesis; thiamine diphosphate biosynthesis. Functionally, catalyzes the rearrangement of 1-deoxy-D-xylulose 5-phosphate (DXP) to produce the thiazole phosphate moiety of thiamine. Sulfur is provided by the thiocarboxylate moiety of the carrier protein ThiS. In vitro, sulfur can be provided by H(2)S. In Prochlorococcus marinus subsp. pastoris (strain CCMP1986 / NIES-2087 / MED4), this protein is Thiazole synthase.